A 668-amino-acid polypeptide reads, in one-letter code: Fructose-1,6-bisphosphatase class 3 (668 aa).

This sequence belongs to the FBPase class 3 family. Mn(2+) serves as cofactor.

It catalyses the reaction beta-D-fructose 1,6-bisphosphate + H2O = beta-D-fructose 6-phosphate + phosphate. It functions in the pathway carbohydrate biosynthesis; gluconeogenesis. This is Fructose-1,6-bisphosphatase class 3 from Clostridium botulinum (strain ATCC 19397 / Type A).